The chain runs to 1360 residues: Transmembrane protein 94 (1360 aa).

The Cytoplasmic segment spans residues 1–64 (MDLREKHLGE…FLHLSNRCSC (64 aa)). Residues 65 to 85 (FHWPGASLMLLAVLLLLCCCG) traverse the membrane as a helical segment. At 86–92 (GQPAGSQ) the chain is on the lumenal side. A helical transmembrane segment spans residues 93–113 (GVELVNASALFLLLLLNLVLI). Over 114 to 273 (GRQDRLKRRE…RPVTALDNER (160 aa)) the chain is Cytoplasmic. Ser221 and Ser225 each carry phosphoserine. The chain crosses the membrane as a helical span at residues 274 to 294 (FTVQSVMLHYAVPVVLAGFLI). Topologically, residues 295–320 (TNALRFMFKAPGVTSWQYTLLQLQVN) are lumenal. A helical transmembrane segment spans residues 321–341 (GMLPILPLLFPVLWVLATACG). At 342-1096 (EARVLAQMSK…RHATYGIRKC (755 aa)) the chain is on the cytoplasmic side. The DKQGIL signature appears at 417-422 (DKQGIL). A phosphoserine mark is found at Ser444, Ser445, and Ser454. The disordered stretch occupies residues 487–545 (EQERSDWLADGPKPSEPYPHHKGHGRSKHPSGSNVSFSRDTEGGEEEPSKAQPGTEGDP). Residues 506 to 515 (HHKGHGRSKH) show a composition bias toward basic residues. A phosphoserine mark is found at Ser517, Ser522, Ser802, and Ser945. The chain crosses the membrane as a helical span at residues 1097-1117 (FLFLLQCQLTLVVIQFLSCLV). The Lumenal segment spans residues 1118–1124 (QLPPLLS). Residues 1125–1145 (TTDILWLSCFCYPLLSISLLG) traverse the membrane as a helical segment. At 1146–1171 (KPPHSSIMSMATGKNLQSIPKKTQHY) the chain is on the cytoplasmic side. Residues 1172–1192 (FLLCFLLKFSLTISSCLVCFG) traverse the membrane as a helical segment. The Lumenal segment spans residues 1193–1232 (FTLQSFCDSARARNLTNCSSVMLCSNDDRAPAWFEDFANG). Residues Asn1206 and Asn1209 are each glycosylated (N-linked (GlcNAc...) asparagine). A helical transmembrane segment spans residues 1233–1253 (LLSAQKLTAALIVLHTVFISI). Residues 1254–1269 (THVHRTKPLWRKSPLT) lie on the Cytoplasmic side of the membrane. A helical membrane pass occupies residues 1270 to 1290 (NLWWAVTVPVVLLGQVVQTVV). Over 1291 to 1310 (DLQLWTHRDSRVHFGLEDVP) the chain is Lumenal. A helical membrane pass occupies residues 1311–1331 (LLTWLLGCLSLVLVVVTNEIV). At 1332–1360 (KLHEIRVRVRYQKRQKLQFETKLGMNSPF) the chain is on the cytoplasmic side. The short motif at 1355–1357 (GMN) is the GMN; metal-binding motif element.

In terms of assembly, forms homooligomers.

Its subcellular location is the endoplasmic reticulum membrane. Could function in the uptake of Mg(2+) from the cytosol into the endoplasmic reticulum and regulate intracellular Mg(2+) homeostasis. The polypeptide is Transmembrane protein 94 (Mus musculus (Mouse)).